The chain runs to 317 residues: Probable cell division protein WhiA (317 aa).

The segment at residues Thr-276–Ala-310 is a DNA-binding region (H-T-H motif).

Belongs to the WhiA family.

In terms of biological role, involved in cell division and chromosome segregation. In Bacillus thuringiensis (strain Al Hakam), this protein is Probable cell division protein WhiA.